We begin with the raw amino-acid sequence, 386 residues long: DNA-directed RNA polymerase subunit Rpo1C (386 aa).

Belongs to the RNA polymerase beta' chain family. In terms of assembly, part of the RNA polymerase complex.

The protein resides in the cytoplasm. The enzyme catalyses RNA(n) + a ribonucleoside 5'-triphosphate = RNA(n+1) + diphosphate. In terms of biological role, DNA-dependent RNA polymerase (RNAP) catalyzes the transcription of DNA into RNA using the four ribonucleoside triphosphates as substrates. Forms part of the jaw domain. This Methanococcus vannielii (strain ATCC 35089 / DSM 1224 / JCM 13029 / OCM 148 / SB) protein is DNA-directed RNA polymerase subunit Rpo1C.